The chain runs to 607 residues: Translation initiation factor IF-2 (607 aa).

Residues 54–93 (SAPQAQDSTPVAETPAAAQPAAPQAASSQPAAAQAAQAVA) form a disordered region. Low complexity predominate over residues 62–93 (TPVAETPAAAQPAAPQAASSQPAAAQAAQAVA). A tr-type G domain is found at 108–281 (HRAPVVTIMG…ELEDLRADPK (174 aa)). The G1 stretch occupies residues 117 to 124 (GHVDHGKT). Position 117–124 (117–124 (GHVDHGKT)) interacts with GTP. A G2 region spans residues 142–146 (GITQH). Positions 163–166 (DTPG) are G3. Residues 163 to 167 (DTPGH) and 217 to 220 (NKVD) contribute to the GTP site. A G4 region spans residues 217–220 (NKVD). A G5 region spans residues 253–255 (SAK).

It belongs to the TRAFAC class translation factor GTPase superfamily. Classic translation factor GTPase family. IF-2 subfamily.

Its subcellular location is the cytoplasm. In terms of biological role, one of the essential components for the initiation of protein synthesis. Protects formylmethionyl-tRNA from spontaneous hydrolysis and promotes its binding to the 30S ribosomal subunits. Also involved in the hydrolysis of GTP during the formation of the 70S ribosomal complex. In Deinococcus deserti (strain DSM 17065 / CIP 109153 / LMG 22923 / VCD115), this protein is Translation initiation factor IF-2.